The primary structure comprises 30 residues: Hainantoxin F6-34.84 (30 aa).

2 disulfide bridges follow: cysteine 2-cysteine 15 and cysteine 9-cysteine 24.

Belongs to the AVIT (prokineticin) family. In terms of tissue distribution, expressed by the venom gland.

The protein resides in the secreted. The protein is Hainantoxin F6-34.84 of Cyriopagopus hainanus (Chinese bird spider).